The chain runs to 202 residues: MSRYRGPRLRVVRRLGELPGLSRKNPRRAYPPGQHGQARKKRSEYAIRLEEKQKLRFNYGVTEGQLIRYVKKARRATGSTGQKLLELLEMRLDNTVFRLGMAGTIPAARQLVNHGHITVNGKVVDIPSYQCRPGEVIAVRNQERSRRLVEANMQYPGLANLPSHLEFDKNTLTGKVNAVIEREWIALQINELLVVEYYSRKA.

The tract at residues 16 to 42 is disordered; sequence GELPGLSRKNPRRAYPPGQHGQARKKR. Residues 90 to 151 form the S4 RNA-binding domain; sequence MRLDNTVFRL…QERSRRLVEA (62 aa).

Belongs to the universal ribosomal protein uS4 family. As to quaternary structure, part of the 30S ribosomal subunit. Contacts protein S5. The interaction surface between S4 and S5 is involved in control of translational fidelity.

In terms of biological role, one of the primary rRNA binding proteins, it binds directly to 16S rRNA where it nucleates assembly of the body of the 30S subunit. Functionally, with S5 and S12 plays an important role in translational accuracy. This chain is Small ribosomal subunit protein uS4, found in Rippkaea orientalis (strain PCC 8801 / RF-1) (Cyanothece sp. (strain PCC 8801)).